The sequence spans 574 residues: MTIEFSNFSFRYESLDKPTLRNINLRIEKGEKIVIIGPSGSGKSTLGQCLNGLIPHAIKGEVSGSLTINGQETATFAMHQFTEQVGTVLQDTDSQFVGLSIGEDIAFALENQLTSNIEMYSLVKATAKMVDLEQMLQRSPHDLSGGQKQRVSLAGILVDDVDILLFDEPLAALDPKTGKRTIEIIDELHRKTGKTVVIIEHRLEDVLHRHVDRIILMDDGEIMADTTPDELLASPLLAQYGIREPLYLTALKSAGCHLALDDHPSSLSELPLANYQHAMADWFHQANTTSNHIRSETLLDVRNLTYSYDGEKNALEGVSFNVQRGEFVSILGKNGSGKSTITKLIMGVIEPDDGAIYLNGQDLSELTIFERSQKVGVVMQNPNHMISHHMIFDEVAFGLRNRGWDEQQVNDKVLEVLELCGLSKYRHWPIEALSYGQKKRVTIASILALEPELLILDEPTAGQDYRNYTSMLSFIEKLNRELGITVVIISHDMHLVLEYTTRSIVIADSQLVADAPMTDVFSNPALLDQANLTTTSLYELATRLNMAETNAFMQHFIDVEKASRLEKTVERNVA.

ABC transporter domains follow at residues 3-244 (IEFS…GIRE) and 299-533 (LDVR…ANLT). Residues 37–44 (GPSGSGKS) and 332–339 (GKNGSGKS) each bind ATP.

The protein belongs to the ABC transporter superfamily.

Its subcellular location is the cell inner membrane. Its function is as follows. Probably part of an ABC transporter complex. Responsible for energy coupling to the transport system. The polypeptide is Putative ABC transporter ATP-binding protein VV2_1533 (Vibrio vulnificus (strain CMCP6)).